A 321-amino-acid polypeptide reads, in one-letter code: Transaldolase (321 aa).

The Schiff-base intermediate with substrate role is filled by K132.

It belongs to the transaldolase family. Type 1 subfamily. In terms of assembly, homodimer.

Its subcellular location is the cytoplasm. It carries out the reaction D-sedoheptulose 7-phosphate + D-glyceraldehyde 3-phosphate = D-erythrose 4-phosphate + beta-D-fructose 6-phosphate. Its pathway is carbohydrate degradation; pentose phosphate pathway; D-glyceraldehyde 3-phosphate and beta-D-fructose 6-phosphate from D-ribose 5-phosphate and D-xylulose 5-phosphate (non-oxidative stage): step 2/3. In terms of biological role, transaldolase is important for the balance of metabolites in the pentose-phosphate pathway. In Rhizobium leguminosarum bv. trifolii (strain WSM2304), this protein is Transaldolase.